We begin with the raw amino-acid sequence, 269 residues long: ParA family protein MG470 (269 aa).

The protein belongs to the ParA family.

The polypeptide is ParA family protein MG470 (Mycoplasma genitalium (strain ATCC 33530 / DSM 19775 / NCTC 10195 / G37) (Mycoplasmoides genitalium)).